Here is a 473-residue protein sequence, read N- to C-terminus: Putative amidase AmiC (473 aa).

Active-site charge relay system residues include lysine 82 and serine 157. Residue serine 181 is the Acyl-ester intermediate of the active site.

This sequence belongs to the amidase family.

It carries out the reaction a monocarboxylic acid amide + H2O = a monocarboxylate + NH4(+). The sequence is that of Putative amidase AmiC (amiC) from Mycobacterium bovis (strain ATCC BAA-935 / AF2122/97).